The following is a 30-amino-acid chain: Uperin-6.2 (30 aa).

Expressed by the skin dorsal glands.

It is found in the secreted. The sequence is that of Uperin-6.2 from Uperoleia inundata (Floodplain toadlet).